Reading from the N-terminus, the 165-residue chain is NADH-ubiquinone oxidoreductase chain 6 (165 aa).

4 consecutive transmembrane segments (helical) span residues 1 to 21 (MVVYVTLIVMLFGSTLVFYSL), 47 to 67 (SFVPIVLFLVYIGGMLVVFPY), 83 to 103 (GEVVGLVFLFSSWVFMSFDNF), and 130 to 150 (GVLVILGVFVLLVALVGALII).

This sequence belongs to the complex I subunit 6 family.

Its subcellular location is the mitochondrion membrane. It carries out the reaction a ubiquinone + NADH + 5 H(+)(in) = a ubiquinol + NAD(+) + 4 H(+)(out). Core subunit of the mitochondrial membrane respiratory chain NADH dehydrogenase (Complex I) that is believed to belong to the minimal assembly required for catalysis. Complex I functions in the transfer of electrons from NADH to the respiratory chain. The immediate electron acceptor for the enzyme is believed to be ubiquinone. The sequence is that of NADH-ubiquinone oxidoreductase chain 6 (ND6) from Strongylocentrotus purpuratus (Purple sea urchin).